A 116-amino-acid chain; its full sequence is Flagellar transcriptional regulator FlhD (116 aa).

Belongs to the FlhD family. As to quaternary structure, homodimer; disulfide-linked. Forms a heterohexamer composed of two FlhC and four FlhD subunits. Each FlhC binds a FlhD dimer, forming a heterotrimer, and a hexamer assembles by dimerization of two heterotrimers.

Its subcellular location is the cytoplasm. Functions in complex with FlhC as a master transcriptional regulator that regulates transcription of several flagellar and non-flagellar operons by binding to their promoter region. Activates expression of class 2 flagellar genes, including fliA, which is a flagellum-specific sigma factor that turns on the class 3 genes. Also regulates genes whose products function in a variety of physiological pathways. This Xenorhabdus nematophila (Achromobacter nematophilus) protein is Flagellar transcriptional regulator FlhD.